Reading from the N-terminus, the 234-residue chain is (5-formylfuran-3-yl)methyl phosphate synthase (234 aa).

The Schiff-base intermediate with substrate role is filled by Lys27. The active-site Proton acceptor is Lys85.

This sequence belongs to the MfnB family.

The catalysed reaction is 2 D-glyceraldehyde 3-phosphate = 4-(hydroxymethyl)-2-furancarboxaldehyde phosphate + phosphate + 2 H2O. It participates in cofactor biosynthesis; methanofuran biosynthesis. In terms of biological role, catalyzes the formation of 4-(hydroxymethyl)-2-furancarboxaldehyde phosphate (4-HFC-P) from two molecules of glyceraldehyde-3-P (GA-3-P). In Methanosarcina acetivorans (strain ATCC 35395 / DSM 2834 / JCM 12185 / C2A), this protein is (5-formylfuran-3-yl)methyl phosphate synthase.